We begin with the raw amino-acid sequence, 518 residues long: Bifunctional purine biosynthesis protein PurH (518 aa).

In terms of domain architecture, MGS-like spans 1–144 (MSKRALISVS…KNHAAVTVVC (144 aa)).

It belongs to the PurH family.

The catalysed reaction is (6R)-10-formyltetrahydrofolate + 5-amino-1-(5-phospho-beta-D-ribosyl)imidazole-4-carboxamide = 5-formamido-1-(5-phospho-D-ribosyl)imidazole-4-carboxamide + (6S)-5,6,7,8-tetrahydrofolate. The enzyme catalyses IMP + H2O = 5-formamido-1-(5-phospho-D-ribosyl)imidazole-4-carboxamide. Its pathway is purine metabolism; IMP biosynthesis via de novo pathway; 5-formamido-1-(5-phospho-D-ribosyl)imidazole-4-carboxamide from 5-amino-1-(5-phospho-D-ribosyl)imidazole-4-carboxamide (10-formyl THF route): step 1/1. The protein operates within purine metabolism; IMP biosynthesis via de novo pathway; IMP from 5-formamido-1-(5-phospho-D-ribosyl)imidazole-4-carboxamide: step 1/1. The protein is Bifunctional purine biosynthesis protein PurH of Lactococcus lactis subsp. cremoris (strain SK11).